A 428-amino-acid polypeptide reads, in one-letter code: Enolase (428 aa).

(2R)-2-phosphoglycerate is bound at residue Gln163. Glu205 serves as the catalytic Proton donor. Residues Asp242, Glu285, and Asp312 each contribute to the Mg(2+) site. The (2R)-2-phosphoglycerate site is built by Lys337, Arg366, Ser367, and Lys388. Lys337 acts as the Proton acceptor in catalysis.

Belongs to the enolase family. Mg(2+) is required as a cofactor.

Its subcellular location is the cytoplasm. The protein resides in the secreted. It is found in the cell surface. The catalysed reaction is (2R)-2-phosphoglycerate = phosphoenolpyruvate + H2O. It participates in carbohydrate degradation; glycolysis; pyruvate from D-glyceraldehyde 3-phosphate: step 4/5. Its function is as follows. Catalyzes the reversible conversion of 2-phosphoglycerate (2-PG) into phosphoenolpyruvate (PEP). It is essential for the degradation of carbohydrates via glycolysis. The polypeptide is Enolase (Moorella thermoacetica (strain ATCC 39073 / JCM 9320)).